We begin with the raw amino-acid sequence, 178 residues long: MSRIGKRIIEIPSSVQASVEGSKLLFKNNKEKHELETHNRVKITLENNQLSFQPIGEDVQSRAYWGTYGALANNIVIGLSTGFSKTLEVNGVGYKVALGNKTLDLSLGFSHPVKYPIPAGIEMVVEKNTITIKGSDKQKVGQVAAEIRSFRPPEPYKGKGVKYSDEVIIRKAGKTAKK.

This sequence belongs to the universal ribosomal protein uL6 family. Part of the 50S ribosomal subunit.

Its function is as follows. This protein binds to the 23S rRNA, and is important in its secondary structure. It is located near the subunit interface in the base of the L7/L12 stalk, and near the tRNA binding site of the peptidyltransferase center. In Helicobacter acinonychis (strain Sheeba), this protein is Large ribosomal subunit protein uL6.